Reading from the N-terminus, the 458-residue chain is tRNA modification GTPase MnmE (458 aa).

Positions 26, 88, and 127 each coordinate (6S)-5-formyl-5,6,7,8-tetrahydrofolate. Residues 224–378 (GLSTAIIGRP…IEDRINQLFF (155 aa)) form the TrmE-type G domain. Residue asparagine 234 coordinates K(+). GTP contacts are provided by residues 234 to 239 (NVGKSS), 253 to 259 (TDIAGTT), and 278 to 281 (DTAG). A Mg(2+)-binding site is contributed by serine 238. The K(+) site is built by threonine 253, isoleucine 255, and threonine 258. Threonine 259 contributes to the Mg(2+) binding site. A (6S)-5-formyl-5,6,7,8-tetrahydrofolate-binding site is contributed by lysine 458.

It belongs to the TRAFAC class TrmE-Era-EngA-EngB-Septin-like GTPase superfamily. TrmE GTPase family. In terms of assembly, homodimer. Heterotetramer of two MnmE and two MnmG subunits. K(+) is required as a cofactor.

Its subcellular location is the cytoplasm. Its function is as follows. Exhibits a very high intrinsic GTPase hydrolysis rate. Involved in the addition of a carboxymethylaminomethyl (cmnm) group at the wobble position (U34) of certain tRNAs, forming tRNA-cmnm(5)s(2)U34. The sequence is that of tRNA modification GTPase MnmE from Streptococcus pyogenes serotype M4 (strain MGAS10750).